The chain runs to 344 residues: L-threonine 3-dehydrogenase (344 aa).

Cysteine 42 provides a ligand contact to Zn(2+). Catalysis depends on charge relay system residues threonine 44 and histidine 47. Zn(2+) contacts are provided by histidine 67, glutamate 68, cysteine 97, cysteine 100, cysteine 103, and cysteine 111. Residues isoleucine 179, aspartate 199, arginine 204, 266–268 (LGI), and 290–291 (IY) each bind NAD(+).

Belongs to the zinc-containing alcohol dehydrogenase family. In terms of assembly, homotetramer. It depends on Zn(2+) as a cofactor.

Its subcellular location is the cytoplasm. It carries out the reaction L-threonine + NAD(+) = (2S)-2-amino-3-oxobutanoate + NADH + H(+). Its pathway is amino-acid degradation; L-threonine degradation via oxydo-reductase pathway; glycine from L-threonine: step 1/2. Catalyzes the NAD(+)-dependent oxidation of L-threonine to 2-amino-3-ketobutyrate. This chain is L-threonine 3-dehydrogenase, found in Mesorhizobium japonicum (strain LMG 29417 / CECT 9101 / MAFF 303099) (Mesorhizobium loti (strain MAFF 303099)).